Consider the following 261-residue polypeptide: Large ribosomal subunit protein uL3 (261 aa).

Residues 138–148 (SVSHRSHGSTG) show a composition bias toward low complexity. Disordered regions lie at residues 138–163 (SVSH…KKMA) and 214–261 (ADAP…GDQA). The residue at position 151 (Gln151) is an N5-methylglutamine. Residues 227–261 (APTPVEAAADEAAPAEEPAVTEAPAAEATEAGDQA) are compositionally biased toward low complexity.

Belongs to the universal ribosomal protein uL3 family. Part of the 50S ribosomal subunit. Forms a cluster with proteins L14 and L19. Post-translationally, methylated by PrmB.

One of the primary rRNA binding proteins, it binds directly near the 3'-end of the 23S rRNA, where it nucleates assembly of the 50S subunit. This is Large ribosomal subunit protein uL3 from Phenylobacterium zucineum (strain HLK1).